The primary structure comprises 326 residues: tRNA(Ile)-lysidine synthase (326 aa).

23–28 provides a ligand contact to ATP; the sequence is SGGVDS.

This sequence belongs to the tRNA(Ile)-lysidine synthase family.

It is found in the cytoplasm. The enzyme catalyses cytidine(34) in tRNA(Ile2) + L-lysine + ATP = lysidine(34) in tRNA(Ile2) + AMP + diphosphate + H(+). Functionally, ligates lysine onto the cytidine present at position 34 of the AUA codon-specific tRNA(Ile) that contains the anticodon CAU, in an ATP-dependent manner. Cytidine is converted to lysidine, thus changing the amino acid specificity of the tRNA from methionine to isoleucine. This is tRNA(Ile)-lysidine synthase from Wolinella succinogenes (strain ATCC 29543 / DSM 1740 / CCUG 13145 / JCM 31913 / LMG 7466 / NCTC 11488 / FDC 602W) (Vibrio succinogenes).